The primary structure comprises 267 residues: S-adenosylmethionine decarboxylase proenzyme (267 aa).

S114 (schiff-base intermediate with substrate; via pyruvic acid) is an active-site residue. S114 bears the Pyruvic acid (Ser); by autocatalysis mark. Residue H119 is the Proton acceptor; for processing activity of the active site. C142 (proton donor; for catalytic activity) is an active-site residue.

This sequence belongs to the prokaryotic AdoMetDC family. Type 2 subfamily. As to quaternary structure, heterooctamer of four alpha and four beta chains arranged as a tetramer of alpha/beta heterodimers. The cofactor is pyruvate. Post-translationally, is synthesized initially as an inactive proenzyme. Formation of the active enzyme involves a self-maturation process in which the active site pyruvoyl group is generated from an internal serine residue via an autocatalytic post-translational modification. Two non-identical subunits are generated from the proenzyme in this reaction, and the pyruvate is formed at the N-terminus of the alpha chain, which is derived from the carboxyl end of the proenzyme. The post-translation cleavage follows an unusual pathway, termed non-hydrolytic serinolysis, in which the side chain hydroxyl group of the serine supplies its oxygen atom to form the C-terminus of the beta chain, while the remainder of the serine residue undergoes an oxidative deamination to produce ammonia and the pyruvoyl group blocking the N-terminus of the alpha chain.

It carries out the reaction S-adenosyl-L-methionine + H(+) = S-adenosyl 3-(methylsulfanyl)propylamine + CO2. The protein operates within amine and polyamine biosynthesis; S-adenosylmethioninamine biosynthesis; S-adenosylmethioninamine from S-adenosyl-L-methionine: step 1/1. Its function is as follows. Catalyzes the decarboxylation of S-adenosylmethionine to S-adenosylmethioninamine (dcAdoMet), the propylamine donor required for the synthesis of the polyamines spermine and spermidine from the diamine putrescine. This is S-adenosylmethionine decarboxylase proenzyme from Erwinia tasmaniensis (strain DSM 17950 / CFBP 7177 / CIP 109463 / NCPPB 4357 / Et1/99).